The following is a 457-amino-acid chain: D-hydantoinase (457 aa).

Zn(2+)-binding residues include His57 and His59. Ser69 bears the Phosphoserine mark. Lys148 lines the Zn(2+) pocket. At Lys148 the chain carries N6-carboxylysine. Tyr153 is a binding site for substrate. Zn(2+) is bound by residues His181 and His237. Substrate is bound at residue Thr286. Asp313 is a binding site for Zn(2+). A substrate-binding site is contributed by Asn335.

The protein belongs to the metallo-dependent hydrolases superfamily. Hydantoinase/dihydropyrimidinase family. In terms of assembly, homodimer and homotetramer. It depends on Zn(2+) as a cofactor. In terms of processing, carboxylation allows a single lysine to coordinate two zinc ions.

Functionally, catalyzes the stereospecific hydrolysis of the cyclic amide bond of D-hydantoin derivatives. The protein is D-hydantoinase (hyuA) of Ralstonia pickettii (Burkholderia pickettii).